A 103-amino-acid polypeptide reads, in one-letter code: Small ribosomal subunit protein uS10 (103 aa).

The protein belongs to the universal ribosomal protein uS10 family. Part of the 30S ribosomal subunit.

Functionally, involved in the binding of tRNA to the ribosomes. The chain is Small ribosomal subunit protein uS10 from Korarchaeum cryptofilum (strain OPF8).